A 148-amino-acid chain; its full sequence is Glyoxalase domain-containing protein 5 (148 aa).

The 121-residue stretch at 25-145 (RLDHIVMTVK…DRNLLEVSSY (121 aa)) folds into the VOC domain.

It belongs to the glyoxalase I family.

This Mus musculus (Mouse) protein is Glyoxalase domain-containing protein 5 (Glod5).